Consider the following 247-residue polypeptide: Glucosamine-6-phosphate deaminase (247 aa).

The Proton acceptor; for enolization step role is filled by aspartate 67. Residue asparagine 136 is the For ring-opening step of the active site. Histidine 138 acts as the Proton acceptor; for ring-opening step in catalysis. Catalysis depends on glutamate 143, which acts as the For ring-opening step.

It belongs to the glucosamine/galactosamine-6-phosphate isomerase family. NagB subfamily.

It catalyses the reaction alpha-D-glucosamine 6-phosphate + H2O = beta-D-fructose 6-phosphate + NH4(+). The protein operates within amino-sugar metabolism; N-acetylneuraminate degradation; D-fructose 6-phosphate from N-acetylneuraminate: step 5/5. In terms of biological role, catalyzes the reversible isomerization-deamination of glucosamine 6-phosphate (GlcN6P) to form fructose 6-phosphate (Fru6P) and ammonium ion. The sequence is that of Glucosamine-6-phosphate deaminase from Shouchella clausii (strain KSM-K16) (Alkalihalobacillus clausii).